The primary structure comprises 266 residues: Hydroxyacylglutathione hydrolase (266 aa).

7 residues coordinate Zn(2+): His-53, His-55, Asp-57, His-58, His-118, Asp-140, and His-178.

The protein belongs to the metallo-beta-lactamase superfamily. Glyoxalase II family. As to quaternary structure, monomer. Zn(2+) is required as a cofactor.

The catalysed reaction is an S-(2-hydroxyacyl)glutathione + H2O = a 2-hydroxy carboxylate + glutathione + H(+). The protein operates within secondary metabolite metabolism; methylglyoxal degradation; (R)-lactate from methylglyoxal: step 2/2. Thiolesterase that catalyzes the hydrolysis of S-D-lactoyl-glutathione to form glutathione and D-lactic acid. The protein is Hydroxyacylglutathione hydrolase of Cupriavidus metallidurans (strain ATCC 43123 / DSM 2839 / NBRC 102507 / CH34) (Ralstonia metallidurans).